A 529-amino-acid polypeptide reads, in one-letter code: Zinc finger protein 490 (529 aa).

Residues 1–53 are disordered; sequence MRRNSSLSFQMERPLEEQVQSKWSSSQGRTGTGGSDVLQMQNSEHHGQSIKTQ. In terms of domain architecture, KRAB spans 57-132; that stretch reads ISLEDVAVNF…ALCENKEDCP (76 aa). 13 consecutive C2H2-type zinc fingers follow at residues 156–178, 194–216, 222–244, 250–272, 278–300, 306–328, 334–356, 362–384, 390–412, 418–440, 446–468, 474–496, and 502–524; these read CDCS…MRSH, HKCK…ERIH, YECK…IRIH, YECK…EKNH, YKCK…ERTH, YECK…EKTH, FVCR…VKTH, YTCK…ERTH, YECK…ERVH, YECK…ERTH, YECK…ERSH, CECK…KRIH, and FQCR…ERTH.

This sequence belongs to the krueppel C2H2-type zinc-finger protein family.

Its subcellular location is the nucleus. Its function is as follows. May be involved in transcriptional regulation. This Homo sapiens (Human) protein is Zinc finger protein 490 (ZNF490).